A 140-amino-acid chain; its full sequence is Small ribosomal subunit protein uS12 (140 aa).

At Pro-59 the chain carries Hydroxyproline.

It belongs to the universal ribosomal protein uS12 family.

This Encephalitozoon cuniculi (strain GB-M1) (Microsporidian parasite) protein is Small ribosomal subunit protein uS12 (RPS23).